The chain runs to 330 residues: UPF0324 membrane protein BT_4609 (330 aa).

10 helical membrane-spanning segments follow: residues I16–I33, A38–G60, Y73–G95, M99–I116, S128–L150, A160–L182, F189–G211, I221–F240, I247–G269, and T284–V306.

Belongs to the UPF0324 family.

It localises to the cell membrane. The chain is UPF0324 membrane protein BT_4609 from Bacteroides thetaiotaomicron (strain ATCC 29148 / DSM 2079 / JCM 5827 / CCUG 10774 / NCTC 10582 / VPI-5482 / E50).